We begin with the raw amino-acid sequence, 439 residues long: Proline--tRNA ligase (439 aa).

The protein belongs to the class-II aminoacyl-tRNA synthetase family. ProS type 2 subfamily. As to quaternary structure, homodimer.

It is found in the cytoplasm. It carries out the reaction tRNA(Pro) + L-proline + ATP = L-prolyl-tRNA(Pro) + AMP + diphosphate. Functionally, catalyzes the attachment of proline to tRNA(Pro) in a two-step reaction: proline is first activated by ATP to form Pro-AMP and then transferred to the acceptor end of tRNA(Pro). The chain is Proline--tRNA ligase from Rhodopseudomonas palustris (strain BisB18).